The following is a 432-amino-acid chain: Glycosyltransferase 6 (432 aa).

The Cytoplasmic portion of the chain corresponds to 1–18 (MGKPGGAKTRTAVCLSDG). A helical; Signal-anchor for type II membrane protein membrane pass occupies residues 19–39 (VFFLAGAFMSLTLVWSYFSIF). At 40–432 (SPSFTSLRHD…LPFDYPNEAW (393 aa)) the chain is on the lumenal side. Asparagine 315 is a glycosylation site (N-linked (GlcNAc...) asparagine).

It belongs to the glycosyltransferase 34 family.

It is found in the golgi apparatus membrane. Functionally, probable glycosyltransferase that may be involved in the biosynthesis of xyloglucan. In Arabidopsis thaliana (Mouse-ear cress), this protein is Glycosyltransferase 6 (GT6).